A 419-amino-acid chain; its full sequence is Isocitrate dehydrogenase [NADP] 1 (419 aa).

Thr105 contributes to the NADP(+) binding site. D-threo-isocitrate is bound by residues Ser114, Asn116, Arg120, Arg130, and Arg154. Asp308 contributes to the Mg(2+) binding site. NADP(+) contacts are provided by residues 340–346, Asn353, Tyr392, and Arg396; that span reads HGTAPKY.

The protein belongs to the isocitrate and isopropylmalate dehydrogenases family. In terms of assembly, homodimer. Mg(2+) is required as a cofactor. It depends on Mn(2+) as a cofactor.

It catalyses the reaction D-threo-isocitrate + NADP(+) = 2-oxoglutarate + CO2 + NADPH. IDH activity is not significantly affected by monovalent cations. The combined addition of Mn(2+) and another divalent cation results in the decrease of the activity. Functionally, catalyzes the oxidative decarboxylation of isocitrate to 2-oxoglutarate and carbon dioxide with the concomitant reduction of NADP(+). Cannot use NAD(+). The polypeptide is Isocitrate dehydrogenase [NADP] 1 (Psychrobacter sp. (strain 13A)).